The primary structure comprises 503 residues: ESX-5 secretion system protein EccD5 (503 aa).

A run of 11 helical transmembrane segments spans residues 137–157 (IVAV…ATGV), 169–189 (LTTI…MLLL), 200–220 (VADI…AAAP), 224–244 (VGSP…ALAL), 250–270 (RLGI…AALA), 272–292 (MVAA…CVVA), 359–379 (FLSG…TSLC), 382–402 (HTGQ…FLLL), 413–433 (SITL…RYAL), 439–459 (LAVS…MAAA), and 480–500 (YLCL…YAAI).

It belongs to the EccD/Snm4 family. As to quaternary structure, part of the ESX-5 / type VII secretion system (T7SS), which is composed of cytosolic and membrane components. The ESX-5 membrane complex is composed of EccB5, EccC5, EccD5 and EccE5.

It is found in the cell inner membrane. In terms of biological role, part of the ESX-5 specialized secretion system, which is responsible for the secretion of EsxN and a number of PE_PGRS and PPE proteins, including PPE41. The chain is ESX-5 secretion system protein EccD5 from Mycobacterium tuberculosis (strain CDC 1551 / Oshkosh).